The following is a 423-amino-acid chain: Protein CLP1 homolog (423 aa).

ATP-binding positions include glutamate 19, lysine 60, and aspartate 122–threonine 127.

Belongs to the Clp1 family. Clp1 subfamily.

It localises to the nucleus. Functionally, required for endonucleolytic cleavage during polyadenylation-dependent pre-mRNA 3'-end formation. The sequence is that of Protein CLP1 homolog (cbc) from Anopheles gambiae (African malaria mosquito).